The following is a 323-amino-acid chain: Phosphoribosylaminoimidazole-succinocarboxamide synthase (323 aa).

This sequence belongs to the SAICAR synthetase family.

The catalysed reaction is 5-amino-1-(5-phospho-D-ribosyl)imidazole-4-carboxylate + L-aspartate + ATP = (2S)-2-[5-amino-1-(5-phospho-beta-D-ribosyl)imidazole-4-carboxamido]succinate + ADP + phosphate + 2 H(+). Its pathway is purine metabolism; IMP biosynthesis via de novo pathway; 5-amino-1-(5-phospho-D-ribosyl)imidazole-4-carboxamide from 5-amino-1-(5-phospho-D-ribosyl)imidazole-4-carboxylate: step 1/2. In Azobacteroides pseudotrichonymphae genomovar. CFP2, this protein is Phosphoribosylaminoimidazole-succinocarboxamide synthase.